The primary structure comprises 465 residues: ATP-dependent rRNA helicase rrp3 (465 aa).

The span at 1–22 (MAPSEKKLTEDKKNSSLNKKIE) shows a compositional bias: basic and acidic residues. The disordered stretch occupies residues 1-44 (MAPSEKKLTEDKKNSSLNKKIETSNSSSEKSSENNNGDSQNNEA). The span at 23 to 36 (TSNSSSEKSSENNN) shows a compositional bias: low complexity. The Q motif signature appears at 46 to 74 (KTFKELGVIDELCEACEKLGFKTPTPIQQ). The Helicase ATP-binding domain maps to 77–248 (IPVVLNKRDV…RASLHQPVRV (172 aa)). ATP is bound at residue 90–97 (AQTGSGKT). The DEAD box signature appears at 196–199 (DEAD). The region spanning 275-419 (YLVYLVNELA…EYEIDKEGVF (145 aa)) is the Helicase C-terminal domain. Basic residues predominate over residues 442–453 (RRKSKGKLHTKR). The interval 442–465 (RRKSKGKLHTKRKRDDLDREEQIY) is disordered. Residues 454–465 (KRDDLDREEQIY) show a composition bias toward basic and acidic residues.

The protein belongs to the DEAD box helicase family. DDX47/RRP3 subfamily. Interacts with the SSU processome.

It localises to the nucleus. It carries out the reaction ATP + H2O = ADP + phosphate + H(+). Functionally, ATP-dependent rRNA helicase required for pre-ribosomal RNA processing. Involved in the maturation of the 35S-pre-rRNA and to its cleavage to mature 18S rRNA. The sequence is that of ATP-dependent rRNA helicase rrp3 from Schizosaccharomyces pombe (strain 972 / ATCC 24843) (Fission yeast).